A 99-amino-acid polypeptide reads, in one-letter code: Small integral membrane protein 14 (99 aa).

At 1-49 (MAEGGFDPCECVCSHEHAMRRLINLLRQSQSYCTDTECLQELPGPSGDN) the chain is on the lumenal side. A helical transmembrane segment spans residues 50 to 70 (GISVTMILVAWMVIALILFLL). Over 71–99 (RPPNLRGSNLPGKPTSPHNGQDPPAPPVD) the chain is Cytoplasmic. Positions 77–99 (GSNLPGKPTSPHNGQDPPAPPVD) are disordered.

Its subcellular location is the endoplasmic reticulum membrane. The sequence is that of Small integral membrane protein 14 (SMIM14) from Pongo abelii (Sumatran orangutan).